Here is a 271-residue protein sequence, read N- to C-terminus: Glutamate racemase (271 aa).

Residues 10–11 (DS) and 42–43 (YG) each bind substrate. Cys-74 functions as the Proton donor/acceptor in the catalytic mechanism. 75 to 76 (NT) serves as a coordination point for substrate. Cys-189 acts as the Proton donor/acceptor in catalysis. 190 to 191 (TH) serves as a coordination point for substrate.

The protein belongs to the aspartate/glutamate racemases family.

It carries out the reaction L-glutamate = D-glutamate. It participates in cell wall biogenesis; peptidoglycan biosynthesis. In terms of biological role, provides the (R)-glutamate required for cell wall biosynthesis. The sequence is that of Glutamate racemase from Bartonella bacilliformis (strain ATCC 35685 / KC583 / Herrer 020/F12,63).